We begin with the raw amino-acid sequence, 559 residues long: Inositol-3-phosphate synthase 1 (559 aa).

Residues Gly-67, Gly-68, Asn-69, Asn-70, Asp-141, Ser-177, Val-178, Gln-188, Arg-191, Thr-228, Ala-229, Asn-230, Thr-231, Gly-278, Ser-279, Asp-303, Ser-306, Asn-337, Asn-338, Asp-339, and Lys-352 each coordinate NAD(+). Ser-279 carries the phosphoserine modification. Ser-357 carries the post-translational modification Phosphoserine. Gly-390, Asp-391, Asp-419, and Ser-420 together coordinate NAD(+).

The protein belongs to the myo-inositol 1-phosphate synthase family. NAD(+) serves as cofactor.

It localises to the cytoplasm. The enzyme catalyses D-glucose 6-phosphate = 1D-myo-inositol 3-phosphate. Its pathway is polyol metabolism; myo-inositol biosynthesis; myo-inositol from D-glucose 6-phosphate: step 1/2. Key enzyme in myo-inositol biosynthesis pathway that catalyzes the conversion of glucose 6-phosphate to 1-myo-inositol 1-phosphate in a NAD-dependent manner. Rate-limiting enzyme in the synthesis of all inositol-containing compounds. This is Inositol-3-phosphate synthase 1 (ISYNA1) from Macaca fascicularis (Crab-eating macaque).